The chain runs to 153 residues: Large ribosomal subunit protein bL9 (153 aa).

The protein belongs to the bacterial ribosomal protein bL9 family.

Its function is as follows. Binds to the 23S rRNA. The protein is Large ribosomal subunit protein bL9 of Micrococcus luteus (strain ATCC 4698 / DSM 20030 / JCM 1464 / CCM 169 / CCUG 5858 / IAM 1056 / NBRC 3333 / NCIMB 9278 / NCTC 2665 / VKM Ac-2230) (Micrococcus lysodeikticus).